The following is a 225-amino-acid chain: Phosphatidylserine decarboxylase proenzyme (225 aa).

Residue serine 182 is the Schiff-base intermediate with substrate; via pyruvic acid of the active site. Serine 182 bears the Pyruvic acid (Ser); by autocatalysis mark.

It belongs to the phosphatidylserine decarboxylase family. PSD-A subfamily. In terms of assembly, heterodimer of a large membrane-associated beta subunit and a small pyruvoyl-containing alpha subunit. Requires pyruvate as cofactor. Is synthesized initially as an inactive proenzyme. Formation of the active enzyme involves a self-maturation process in which the active site pyruvoyl group is generated from an internal serine residue via an autocatalytic post-translational modification. Two non-identical subunits are generated from the proenzyme in this reaction, and the pyruvate is formed at the N-terminus of the alpha chain, which is derived from the carboxyl end of the proenzyme. The post-translation cleavage follows an unusual pathway, termed non-hydrolytic serinolysis, in which the side chain hydroxyl group of the serine supplies its oxygen atom to form the C-terminus of the beta chain, while the remainder of the serine residue undergoes an oxidative deamination to produce ammonia and the pyruvoyl prosthetic group on the alpha chain.

It localises to the cell membrane. The enzyme catalyses a 1,2-diacyl-sn-glycero-3-phospho-L-serine + H(+) = a 1,2-diacyl-sn-glycero-3-phosphoethanolamine + CO2. It participates in phospholipid metabolism; phosphatidylethanolamine biosynthesis; phosphatidylethanolamine from CDP-diacylglycerol: step 2/2. Catalyzes the formation of phosphatidylethanolamine (PtdEtn) from phosphatidylserine (PtdSer). In Neorickettsia sennetsu (strain ATCC VR-367 / Miyayama) (Ehrlichia sennetsu), this protein is Phosphatidylserine decarboxylase proenzyme.